Reading from the N-terminus, the 282-residue chain is Biotin synthase (282 aa).

The Radical SAM core domain occupies 1-228 (MQEIFLCSIS…NARLMVAGGR (228 aa)). 3 residues coordinate [4Fe-4S] cluster: Cys17, Cys21, and Cys24. [2Fe-2S] cluster contacts are provided by Cys61, Cys96, Cys154, and Arg221.

Belongs to the radical SAM superfamily. Biotin synthase family. In terms of assembly, homodimer. [4Fe-4S] cluster serves as cofactor. [2Fe-2S] cluster is required as a cofactor.

It catalyses the reaction (4R,5S)-dethiobiotin + (sulfur carrier)-SH + 2 reduced [2Fe-2S]-[ferredoxin] + 2 S-adenosyl-L-methionine = (sulfur carrier)-H + biotin + 2 5'-deoxyadenosine + 2 L-methionine + 2 oxidized [2Fe-2S]-[ferredoxin]. It functions in the pathway cofactor biosynthesis; biotin biosynthesis; biotin from 7,8-diaminononanoate: step 2/2. Catalyzes the conversion of dethiobiotin (DTB) to biotin by the insertion of a sulfur atom into dethiobiotin via a radical-based mechanism. The protein is Biotin synthase of Helicobacter pylori (strain HPAG1).